The sequence spans 599 residues: Elongation factor 4 (599 aa).

In terms of domain architecture, tr-type G spans 2–184; the sequence is KNIRNFSIIA…RLVRDIPPPQ (183 aa). GTP is bound by residues 14–19 and 131–134; these read DHGKST and NKID.

The protein belongs to the TRAFAC class translation factor GTPase superfamily. Classic translation factor GTPase family. LepA subfamily.

Its subcellular location is the cell inner membrane. It catalyses the reaction GTP + H2O = GDP + phosphate + H(+). Its function is as follows. Required for accurate and efficient protein synthesis under certain stress conditions. May act as a fidelity factor of the translation reaction, by catalyzing a one-codon backward translocation of tRNAs on improperly translocated ribosomes. Back-translocation proceeds from a post-translocation (POST) complex to a pre-translocation (PRE) complex, thus giving elongation factor G a second chance to translocate the tRNAs correctly. Binds to ribosomes in a GTP-dependent manner. The protein is Elongation factor 4 of Salmonella paratyphi C (strain RKS4594).